The sequence spans 285 residues: 2,4-didehydro-3-deoxy-L-rhamnonate hydrolase (285 aa).

A pyruvate-binding site is contributed by Leu-73. Mg(2+)-binding residues include Glu-119, Glu-121, and Asp-150. Residues Lys-168 and Thr-238 each coordinate pyruvate.

This sequence belongs to the FAH family. As to quaternary structure, homodimer. Requires Mg(2+) as cofactor.

The enzyme catalyses 2,4-didehydro-3-deoxy-L-rhamnonate + H2O = (S)-lactate + pyruvate + H(+). It functions in the pathway carbohydrate degradation; L-rhamnose degradation. In terms of biological role, hydrolase that catalyzes the hydrolysis of 2,4-didehydro-3-deoxy-L-rhamnonate to pyruvate and L-lactate. Can also hydrolyze L-2,4-diketo-3-deoxylyxonate and L-2,4-diketo-3-deoxymannonate. In vitro can also use acylpyruvates such as acetylpyruvate and trimethylacetopyruvate. Catalyzes the fifth (last) step in an alternative pathway for rhamnose utilization that does not involve phosphorylated intermediates. In Sphingomonas sp. (strain SKA58), this protein is 2,4-didehydro-3-deoxy-L-rhamnonate hydrolase.